We begin with the raw amino-acid sequence, 251 residues long: Hydroxyacylglutathione hydrolase (251 aa).

Zn(2+) is bound by residues H53, H55, D57, H58, H110, D127, and H165.

Belongs to the metallo-beta-lactamase superfamily. Glyoxalase II family. As to quaternary structure, monomer. The cofactor is Zn(2+).

The enzyme catalyses an S-(2-hydroxyacyl)glutathione + H2O = a 2-hydroxy carboxylate + glutathione + H(+). It participates in secondary metabolite metabolism; methylglyoxal degradation; (R)-lactate from methylglyoxal: step 2/2. In terms of biological role, thiolesterase that catalyzes the hydrolysis of S-D-lactoyl-glutathione to form glutathione and D-lactic acid. This is Hydroxyacylglutathione hydrolase from Pectobacterium atrosepticum (strain SCRI 1043 / ATCC BAA-672) (Erwinia carotovora subsp. atroseptica).